A 102-amino-acid chain; its full sequence is Putative pterin-4-alpha-carbinolamine dehydratase (102 aa).

The protein belongs to the pterin-4-alpha-carbinolamine dehydratase family.

The catalysed reaction is (4aS,6R)-4a-hydroxy-L-erythro-5,6,7,8-tetrahydrobiopterin = (6R)-L-erythro-6,7-dihydrobiopterin + H2O. The chain is Putative pterin-4-alpha-carbinolamine dehydratase from Burkholderia cenocepacia (strain ATCC BAA-245 / DSM 16553 / LMG 16656 / NCTC 13227 / J2315 / CF5610) (Burkholderia cepacia (strain J2315)).